Reading from the N-terminus, the 64-residue chain is Large ribosomal subunit protein bL28 (64 aa).

It belongs to the bacterial ribosomal protein bL28 family.

This is Large ribosomal subunit protein bL28 from Campylobacter jejuni subsp. jejuni serotype O:6 (strain 81116 / NCTC 11828).